A 261-amino-acid polypeptide reads, in one-letter code: Triosephosphate isomerase (261 aa).

10–12 (NWK) contributes to the substrate binding site. Histidine 100 functions as the Electrophile in the catalytic mechanism. Glutamate 172 serves as the catalytic Proton acceptor. Residues glycine 178, serine 218, and 239–240 (GG) each bind substrate.

The protein belongs to the triosephosphate isomerase family. As to quaternary structure, homodimer.

It is found in the cytoplasm. It carries out the reaction D-glyceraldehyde 3-phosphate = dihydroxyacetone phosphate. Its pathway is carbohydrate biosynthesis; gluconeogenesis. It functions in the pathway carbohydrate degradation; glycolysis; D-glyceraldehyde 3-phosphate from glycerone phosphate: step 1/1. Functionally, involved in the gluconeogenesis. Catalyzes stereospecifically the conversion of dihydroxyacetone phosphate (DHAP) to D-glyceraldehyde-3-phosphate (G3P). The chain is Triosephosphate isomerase from Saccharopolyspora erythraea (strain ATCC 11635 / DSM 40517 / JCM 4748 / NBRC 13426 / NCIMB 8594 / NRRL 2338).